The sequence spans 122 residues: Large ribosomal subunit protein uL14c (122 aa).

It belongs to the universal ribosomal protein uL14 family. Part of the 50S ribosomal subunit.

The protein localises to the plastid. The protein resides in the chloroplast. Functionally, binds to 23S rRNA. This chain is Large ribosomal subunit protein uL14c, found in Chaetosphaeridium globosum (Charophycean green alga).